The following is a 198-amino-acid chain: Small ribosomal subunit protein uS4 (198 aa).

The S4 RNA-binding domain occupies 90-152 (TRLDNLVLRA…SRSNELFKEN (63 aa)).

It belongs to the universal ribosomal protein uS4 family. Part of the 30S ribosomal subunit. Contacts protein S5. The interaction surface between S4 and S5 is involved in control of translational fidelity.

One of the primary rRNA binding proteins, it binds directly to 16S rRNA where it nucleates assembly of the body of the 30S subunit. Functionally, with S5 and S12 plays an important role in translational accuracy. This is Small ribosomal subunit protein uS4 from Finegoldia magna (strain ATCC 29328 / DSM 20472 / WAL 2508) (Peptostreptococcus magnus).